The sequence spans 413 residues: Histidine--tRNA ligase (413 aa).

The protein belongs to the class-II aminoacyl-tRNA synthetase family. Homodimer.

It is found in the cytoplasm. The enzyme catalyses tRNA(His) + L-histidine + ATP = L-histidyl-tRNA(His) + AMP + diphosphate + H(+). This Rickettsia prowazekii (strain Madrid E) protein is Histidine--tRNA ligase (hisS).